The chain runs to 243 residues: Proteasome subunit beta (243 aa).

Polar residues predominate over residues 1–16 (MRAPQHNSDFSRTVNQ). Residues 1–29 (MRAPQHNSDFSRTVNQLADDPNPYEPEVG) are disordered. Positions 1-48 (MRAPQHNSDFSRTVNQLADDPNPYEPEVGSMPKNEFSRADLDNVNKTG) are cleaved as a propeptide — removed in mature form; by autocatalysis. The Nucleophile role is filled by T49.

It belongs to the peptidase T1B family. As to quaternary structure, the 20S proteasome core is composed of 14 alpha and 14 beta subunits that assemble into four stacked heptameric rings, resulting in a barrel-shaped structure. The two inner rings, each composed of seven catalytic beta subunits, are sandwiched by two outer rings, each composed of seven alpha subunits. The catalytic chamber with the active sites is on the inside of the barrel. Has a gated structure, the ends of the cylinder being occluded by the N-termini of the alpha-subunits. Is capped at one or both ends by the proteasome regulatory ATPase, PAN.

The protein localises to the cytoplasm. It catalyses the reaction Cleavage of peptide bonds with very broad specificity.. Its activity is regulated as follows. The formation of the proteasomal ATPase PAN-20S proteasome complex, via the docking of the C-termini of PAN into the intersubunit pockets in the alpha-rings, triggers opening of the gate for substrate entry. Interconversion between the open-gate and close-gate conformations leads to a dynamic regulation of the 20S proteasome proteolysis activity. Component of the proteasome core, a large protease complex with broad specificity involved in protein degradation. This chain is Proteasome subunit beta, found in Natrialba magadii (strain ATCC 43099 / DSM 3394 / CCM 3739 / CIP 104546 / IAM 13178 / JCM 8861 / NBRC 102185 / NCIMB 2190 / MS3) (Natronobacterium magadii).